The following is a 214-amino-acid chain: Cytochrome b (214 aa).

4 consecutive transmembrane segments (helical) span residues 31-51 (FGSM…FLAI), 75-96 (WIMQ…YIHI), 111-131 (WLSG…GYVL), and 176-196 (FFAL…IHII). The heme b site is built by His-81 and His-95. 2 residues coordinate heme b: His-180 and His-194. A ubiquinone is bound at residue His-199.

Belongs to the cytochrome b family. As to quaternary structure, the cytochrome bc1 complex contains 3 respiratory subunits (MT-CYB, CYC1 and UQCRFS1), 2 core proteins (UQCRC1 and UQCRC2) and probably 6 low-molecular weight proteins. Requires heme b as cofactor.

The protein localises to the mitochondrion inner membrane. Functionally, component of the ubiquinol-cytochrome c reductase complex (complex III or cytochrome b-c1 complex) that is part of the mitochondrial respiratory chain. The b-c1 complex mediates electron transfer from ubiquinol to cytochrome c. Contributes to the generation of a proton gradient across the mitochondrial membrane that is then used for ATP synthesis. The chain is Cytochrome b (MT-CYB) from Atractaspis micropholis (Mole viper).